The sequence spans 552 residues: Putative transport protein YPN_3727 (552 aa).

6 helical membrane-spanning segments follow: residues 1 to 21, 26 to 46, 65 to 85, 96 to 116, 119 to 139, and 158 to 178; these read MSAIALTVSMLALVAVLGLWI, IYGVGLGIGGVLFGGIIVGHF, FGLILFVYTIGIQVGPGFFSS, FAILMVVVGGLVTAIIHKLFA, LPIILGVFSGAVTNTPALGAA, and MGYAMAYPFGICGILLVMWLI. 2 consecutive RCK C-terminal domains span residues 192 to 276 and 279 to 361; these read AFDS…VVGE and DVTL…IVGN. The next 6 membrane-spanning stretches (helical) occupy residues 371–391, 393–413, 439–459, 464–484, 493–513, and 530–550; these read MLPVFIGVGLGVLLGSIPLFV, GFPAALRLGLAGGPLVVALIL, IVLFLSVVGLKSGGDFINTLV, LAWIGYGAMITGIPLLTVGIL, YLTLCGMLAGSMTDPPALAFA, and VYPLAMFLRIMSPQILAVLFW.

It belongs to the AAE transporter (TC 2.A.81) family. YidE subfamily.

It is found in the cell membrane. The sequence is that of Putative transport protein YPN_3727 from Yersinia pestis bv. Antiqua (strain Nepal516).